We begin with the raw amino-acid sequence, 648 residues long: Sodium/nucleoside cotransporter 1 (648 aa).

Over 1–80 the chain is Cytoplasmic; sequence MADNTQRQRE…ARSFCREHRQ (80 aa). The helical transmembrane segment at 81–104 threads the bilayer; that stretch reads LFGWICKGLLSTACLGFLMVACLL. Residues 105–109 are Extracellular-facing; the sequence is DLQRA. Residues 110 to 128 traverse the membrane as a helical segment; the sequence is LALLIITCVVLVFLAYDLL. At 129–147 the chain is on the cytoplasmic side; it reads KRLLGSKLRRCVKFQGHSC. The chain crosses the membrane as a helical span at residues 148 to 167; that stretch reads LSLWLKRGLALAAGVGLILW. Residues 168–178 lie on the Extracellular side of the membrane; it reads LSLDTAQRPEQ. A helical transmembrane segment spans residues 179–195; sequence LVSFAGICVFLVLLFAG. Residues 196–201 are Cytoplasmic-facing; sequence SKHHRA. The chain crosses the membrane as a helical span at residues 202 to 222; sequence VSWRAVSWGLGLQFVLGLFVI. At 223-261 the chain is on the extracellular side; that stretch reads RTEPGFIAFQWLGDQIQVFLSYTEAGSSFVFGEALVKDV. A helical membrane pass occupies residues 262-283; it reads FAFQVLPIIIFFSCVMSVLYYL. The Cytoplasmic segment spans residues 284-294; the sequence is GLMQWVILKIA. Residues 295 to 318 traverse the membrane as a helical segment; sequence WLMQVTMGTSATETLSVAGNIFVS. The Extracellular segment spans residues 319-337; that stretch reads QTEAPLLIRPYLADMTLSE. Residues 338–360 form a helical membrane-spanning segment; the sequence is VHVVMTGGYATIAGSLLGAYISF. Residues 361-366 lie on the Cytoplasmic side of the membrane; the sequence is GIDAAS. The chain crosses the membrane as a helical span at residues 367 to 386; the sequence is LIAASVMAAPCALALSKLVY. Topologically, residues 387–423 are extracellular; that stretch reads PEVEESKFRSENGVKLTYGDAQNLLEAASAGAAISVK. The helical transmembrane segment at 424–446 threads the bilayer; sequence VVANIAANLIAFLAVLAFVNAAL. At 447-457 the chain is on the cytoplasmic side; it reads SWLGDMVDIQG. The helical transmembrane segment at 458–479 threads the bilayer; that stretch reads LSFQLICSYVLRPVAFLMGVAW. Over 480–534 the chain is Extracellular; that stretch reads EDCPVVAELLGIKFFLNEFVAYQELSQYKQRRLAGAEEWLGDKKQWISVRAEILT. The chain crosses the membrane as a helical span at residues 535 to 558; the sequence is TYALCGFANFSSIGIMLGGLTSLV. Over 559–569 the chain is Cytoplasmic; that stretch reads PQRRSDFSQIV. Residues 570-592 form a helical membrane-spanning segment; it reads LRALITGAFVSLLNACVAGILYV. At 593–648 the chain is on the extracellular side; sequence PRGVEVDCVSLLNQTVSSSSFEVYLCCRQVFQSTSSEFSQVALDNCCRFYNHTVCT. N-linked (GlcNAc...) asparagine glycosylation is found at asparagine 605 and asparagine 643.

It belongs to the concentrative nucleoside transporter (CNT) (TC 2.A.41) family. N-glycosylated. N-glycosylation is required for localization to the plasma membrane and the transporter activity. Expressed predominantly in the brush-border membranes of the polarized epithelial cells of jejunum and renal cortical tubules and in the bile canalicular membranes of liver parenchymal cells.

Its subcellular location is the cell membrane. The protein resides in the apical cell membrane. The enzyme catalyses uridine(out) + Na(+)(out) = uridine(in) + Na(+)(in). It catalyses the reaction thymidine(out) + Na(+)(out) = thymidine(in) + Na(+)(in). It carries out the reaction cytidine(out) + Na(+)(out) = cytidine(in) + Na(+)(in). The catalysed reaction is adenosine(out) + Na(+)(out) = adenosine(in) + Na(+)(in). With respect to regulation, due to its high apparent affinity but slow transport, adenosine could act as a negative regulator of pyrimidine transport under some conditions. Functionally, sodium and pyrimidine nucleoside symporter of the plasma membrane that imports uridine, thymidine and cytidine into cells by coupling their transport to the transmembrane sodium electrochemical gradient. Also transports adenosine, an atypical substrate transported with high apparent affinity, but low maximum velocity. Therefore, exhibits the transport characteristics of the nucleoside transport system cit or N2 subtype (N2/cit). Involved in renal nucleoside (re)absorption. This chain is Sodium/nucleoside cotransporter 1, found in Rattus norvegicus (Rat).